We begin with the raw amino-acid sequence, 469 residues long: 6-phosphofructo-2-kinase/fructose-2,6-bisphosphatase 4 (469 aa).

Residues 1-249 (MASPRELTQN…YYLMNIHVTP (249 aa)) form a 6-phosphofructo-2-kinase region. An ATP-binding site is contributed by 46-54 (GLPARGKTY). Residues Arg79 and Arg103 each contribute to the beta-D-fructose 6-phosphate site. Asp129 is an active-site residue. Thr131 and Arg137 together coordinate beta-D-fructose 6-phosphate. Cys159 is an active-site residue. 168-173 (NIVQVK) contributes to the ATP binding site. Beta-D-fructose 6-phosphate is bound by residues Lys173, Arg194, and Tyr198. A fructose-2,6-bisphosphatase region spans residues 250 to 469 (RSIYLCRHGE…EALVTVPAHQ (220 aa)). Arg256 contacts beta-D-fructose 2,6-bisphosphate. Residue His257 is the Tele-phosphohistidine intermediate of the active site. Residues Asn263, Gly269, and Arg306 each contribute to the beta-D-fructose 2,6-bisphosphate site. Residue Glu326 is the Proton donor/acceptor of the active site. Tyr337, Arg351, Lys355, Tyr366, Gln392, and Arg396 together coordinate beta-D-fructose 2,6-bisphosphate. Residue 348–351 (FALR) coordinates ATP. ATP contacts are provided by residues 392-396 (QAVMR) and Tyr428. Thr444 is modified (phosphothreonine; by PKC).

The protein in the C-terminal section; belongs to the phosphoglycerate mutase family. In terms of assembly, homodimer.

The catalysed reaction is beta-D-fructose 2,6-bisphosphate + H2O = beta-D-fructose 6-phosphate + phosphate. The enzyme catalyses beta-D-fructose 6-phosphate + ATP = beta-D-fructose 2,6-bisphosphate + ADP + H(+). Its activity is regulated as follows. The most important regulatory mechanism of these opposing activities is by phosphorylation and dephosphorylation of the enzyme. In terms of biological role, synthesis and degradation of fructose 2,6-bisphosphate. The polypeptide is 6-phosphofructo-2-kinase/fructose-2,6-bisphosphatase 4 (PFKFB4) (Homo sapiens (Human)).